A 391-amino-acid polypeptide reads, in one-letter code: Methyltransferase/ribosomally synthesized type I borosin cyclic peptide precursor cmaMA (391 aa).

The interval 1–253 (MDATANPKAG…TISTFYLPPK (253 aa)) is methyltransferase domain. Catalysis depends on residues arginine 72, tyrosine 76, and tyrosine 98. The S-adenosyl-L-methionine site is built by tyrosine 98, histidine 100, valine 103, alanine 130, glutamine 172, alanine 215, serine 246, and threonine 247. Residues 254–373 (APSAKVSLNR…AQLSGALKEG (120 aa)) form a clasp domain region. The tract at residues 374–376 (GVP) is precursor leader. Leucine 382 is modified (N-methylleucine). Residues phenylalanine 385 and phenylalanine 386 each carry the N-methylphenylalanine modification. 2 positions are modified to N-methylisoleucine: isoleucine 387 and isoleucine 388.

The protein in the N-terminal section; belongs to the precorrin methyltransferase family. In terms of assembly, homodimer. CmaMA automethylates at Leu-382, Phe-385, Phe-386, Ile-387 and Ile-388 before being processed by the prolyloligopeptidase ledP which likely forms a peptidyl ester upon removal of the follower propeptide, which then undergoes macrocyclization with the N-terminus of the modified core peptide. Peptide backbone alpha-N-methylations change the physicochemical properties of amide bonds to provide structural constraints and other favorable characteristics including biological membrane permeability to peptides.

Its pathway is secondary metabolite biosynthesis. Fusion protein of the methyltransferase cmaM and a type I borosin core peptide; part of the gene cluster that mediates the biosynthesis of a type I borosin, a highly methylated cyclic peptide with potent biological activities. Type I borosins derive from the C-terminus of the fusion protein, and it is the same protein that methylates its own C-terminus using S-adenosyl methionine (SAM). The C-terminus is subsequently cleaved off and macrocyclized by a prolyloligopeptidase to give the final product. The polypeptide is Methyltransferase/ribosomally synthesized type I borosin cyclic peptide precursor cmaMA (Coprinopsis marcescibilis (Agaric fungus)).